A 526-amino-acid chain; its full sequence is Microphthalmia-associated transcription factor (526 aa).

The disordered stretch occupies residues 20-54 (EPKTYYELKSQPLKSSSSAEHSGASKPPLSSSTMT). The segment covering 34–44 (SSSSAEHSGAS) has biased composition (low complexity). Position 180 is a phosphoserine; by MAPK (S180). Residue K289 forms a Glycyl lysine isopeptide (Lys-Gly) (interchain with G-Cter in SUMO) linkage. Residues 311 to 364 (QKKDNHNLIERRRRFNINDRIKELGTLIPKSNDPDMRWNKGTILKASVDYIRKL) enclose the bHLH domain. Residues 355-401 (KASVDYIRKLQREQQRAKDLENRQKKLEHANRHLLLRVQELEMQARA) are a coiled coil. Positions 374–395 (LENRQKKLEHANRHLLLRVQEL) are leucine-zipper. Phosphoserine; by GSK3 is present on S405. A Phosphoserine modification is found at S414. A Glycyl lysine isopeptide (Lys-Gly) (interchain with G-Cter in SUMO) cross-link involves residue K423. Phosphoserine is present on S491. The segment at 496–526 (TDPLLSSVSPGASKTSSRRSSMSAEETEHAC) is disordered. The span at 507 to 519 (ASKTSSRRSSMSA) shows a compositional bias: low complexity. A Phosphoserine; by RPS6KA1 modification is found at S516.

It belongs to the MiT/TFE family. As to quaternary structure, homodimer or heterodimer; dimerization is mediated via the coiled coil region. Efficient DNA binding requires dimerization with another bHLH protein. Binds DNA in the form of homodimer or heterodimer with either TFE3, TFEB or TFEC. Identified in a complex with HINT1 and CTNNB1. Interacts with KARS1. Interacts with VSX2. Post-translationally, phosphorylation at Ser-405 significantly enhances the ability to bind the tyrosinase promoter. Phosphorylated at Ser-180 and Ser-516 following KIT signaling, triggering a short live activation: Phosphorylation at Ser-180 and Ser-516 by MAPK and RPS6KA1, respectively, activate the transcription factor activity but also promote ubiquitination and subsequent degradation by the proteasome. Phosphorylated in response to blue light (415nm). In terms of processing, ubiquitinated following phosphorylation at Ser-180, leading to subsequent degradation by the proteasome. Deubiquitinated by USP13, preventing its degradation.

Its subcellular location is the nucleus. The protein localises to the cytoplasm. Its function is as follows. Transcription factor that regulates the expression of genes with essential roles in cell differentiation, proliferation and survival. Binds to M-boxes (5'-TCATGTG-3') and symmetrical DNA sequences (E-boxes) (5'-CACGTG-3') found in the promoters of target genes, such as BCL2 and tyrosinase (TYR). Plays an important role in melanocyte development by regulating the expression of tyrosinase (TYR) and tyrosinase-related protein 1 (TYRP1). Plays a critical role in the differentiation of various cell types, such as neural crest-derived melanocytes, mast cells, osteoclasts and optic cup-derived retinal pigment epithelium. This Rattus norvegicus (Rat) protein is Microphthalmia-associated transcription factor (Mitf).